The primary structure comprises 513 residues: Na(+)/H(+) antiporter NhaB (513 aa).

The next 11 membrane-spanning stretches (helical) occupy residues 21–41 (LCII…SPFI), 43–63 (GWTL…CYPL), 88–108 (IIAN…IYFM), 137–157 (AAFL…ISVG), 202–222 (LLMH…VGEP), 235–255 (FIEF…CGIA), 299–318 (MAIQ…LHLA), 322–344 (IIGL…HAIG), 350–370 (PMPF…IVDL), 389–409 (LALF…VFVG), and 477–497 (MALP…EYLL).

Belongs to the NhaB Na(+)/H(+) (TC 2.A.34) antiporter family.

Its subcellular location is the cell inner membrane. The enzyme catalyses 2 Na(+)(in) + 3 H(+)(out) = 2 Na(+)(out) + 3 H(+)(in). Functionally, na(+)/H(+) antiporter that extrudes sodium in exchange for external protons. The polypeptide is Na(+)/H(+) antiporter NhaB (Haemophilus ducreyi (strain 35000HP / ATCC 700724)).